The primary structure comprises 91 residues: Protein sigN139 (91 aa).

N-linked (GlcNAc...) asparagine glycans are attached at residues N23 and N34. The helical transmembrane segment at 46 to 68 (LLPVVAFISGTVTSITGLVAGAL) threads the bilayer.

It localises to the membrane. This is Protein sigN139 from Dictyostelium discoideum (Social amoeba).